Consider the following 1028-residue polypeptide: Unconventional myosin-Ic-A (1028 aa).

M1 carries the post-translational modification N-acetylmethionine. The Myosin motor domain maps to 12 to 696 (GVQDFVLLEN…TLFATEDALE (685 aa)). Residue 105–112 (GESGSGKT) coordinates ATP. Position 348 is an N6-methyllysine (K348). Residues 573–595 (LSKLMEILMSKEPSYVRCIKPND) form an actin-binding region. 2 IQ domains span residues 699-728 (KQGI…SAIN) and 722-751 (MKHS…AVDV). A TH1 domain is found at 850–1024 (KDNYPQSVPR…NGHLSVVAPR (175 aa)).

This sequence belongs to the TRAFAC class myosin-kinesin ATPase superfamily. Myosin family. As to quaternary structure, interacts (via its IQ motifs) with calmodulin.

It localises to the cytoplasm. Its subcellular location is the cell membrane. The protein resides in the cell projection. The protein localises to the stereocilium membrane. Myosins are actin-based motor molecules with ATPase activity. Unconventional myosins serve in intracellular movements. Their highly divergent tails are presumed to bind to membranous compartments, which would be moved relative to actin filaments. Involved in egg activation by coupling dynamic actin to membrane. This Xenopus laevis (African clawed frog) protein is Unconventional myosin-Ic-A (myo1c-a).